The following is a 101-amino-acid chain: Ubiquitin-related modifier 1 (101 aa).

Glycine 101 carries the 1-thioglycine modification. Glycine 101 participates in a covalent cross-link: Glycyl lysine isopeptide (Gly-Lys) (interchain with K-? in acceptor proteins).

This sequence belongs to the URM1 family. Component of a complex at least composed of URM1, CTU2/NCS2 and CTU1/ATPBD3. Post-translationally, C-terminal thiocarboxylation occurs in 2 steps, it is first acyl-adenylated (-COAMP) via the hesA/moeB/thiF part of MOCS3, then thiocarboxylated (-COSH) via the rhodanese domain of MOCS3.

The protein resides in the cytoplasm. The protein operates within tRNA modification; 5-methoxycarbonylmethyl-2-thiouridine-tRNA biosynthesis. Acts as a sulfur carrier required for 2-thiolation of mcm(5)S(2)U at tRNA wobble positions of cytosolic tRNA(Lys), tRNA(Glu) and tRNA(Gln). Serves as sulfur donor in tRNA 2-thiolation reaction by being thiocarboxylated (-COSH) at its C-terminus by MOCS3. The sulfur is then transferred to tRNA to form 2-thiolation of mcm(5)S(2)U. Also acts as a ubiquitin-like protein (UBL) that is covalently conjugated via an isopeptide bond to lysine residues of target proteins such as MOCS3, ATPBD3, CTU2, USP15 and CAS. The thiocarboxylated form serves as substrate for conjugation and oxidative stress specifically induces the formation of UBL-protein conjugates. The sequence is that of Ubiquitin-related modifier 1 from Bos taurus (Bovine).